The following is a 443-amino-acid chain: UDP-N-acetylmuramate--L-alanine ligase (443 aa).

110–116 (GAHGKTS) serves as a coordination point for ATP.

It belongs to the MurCDEF family.

It localises to the cytoplasm. It carries out the reaction UDP-N-acetyl-alpha-D-muramate + L-alanine + ATP = UDP-N-acetyl-alpha-D-muramoyl-L-alanine + ADP + phosphate + H(+). The protein operates within cell wall biogenesis; peptidoglycan biosynthesis. Functionally, cell wall formation. This Streptococcus gordonii (strain Challis / ATCC 35105 / BCRC 15272 / CH1 / DL1 / V288) protein is UDP-N-acetylmuramate--L-alanine ligase.